We begin with the raw amino-acid sequence, 249 residues long: Small ribosomal subunit protein uS2 (249 aa).

The protein belongs to the universal ribosomal protein uS2 family.

This Bordetella avium (strain 197N) protein is Small ribosomal subunit protein uS2.